A 276-amino-acid polypeptide reads, in one-letter code: Diaminopimelate epimerase (276 aa).

Substrate contacts are provided by Asn-13, Gln-46, and Asn-66. Residue Cys-75 is the Proton donor of the active site. Residues 76-77 (GN), Asn-159, Asn-192, and 210-211 (ER) contribute to the substrate site. Cys-219 functions as the Proton acceptor in the catalytic mechanism. Residue 220-221 (GT) participates in substrate binding.

It belongs to the diaminopimelate epimerase family. In terms of assembly, homodimer.

It is found in the cytoplasm. It carries out the reaction (2S,6S)-2,6-diaminopimelate = meso-2,6-diaminopimelate. The protein operates within amino-acid biosynthesis; L-lysine biosynthesis via DAP pathway; DL-2,6-diaminopimelate from LL-2,6-diaminopimelate: step 1/1. Functionally, catalyzes the stereoinversion of LL-2,6-diaminopimelate (L,L-DAP) to meso-diaminopimelate (meso-DAP), a precursor of L-lysine and an essential component of the bacterial peptidoglycan. This Pseudomonas aeruginosa (strain UCBPP-PA14) protein is Diaminopimelate epimerase.